The primary structure comprises 97 residues: Protein CYSTEINE-RICH TRANSMEMBRANE MODULE 7 (97 aa).

Residues M1 to P27 are disordered. Over residues G15 to P27 the composition is skewed to pro residues. A helical membrane pass occupies residues Y68–V88.

Belongs to the CYSTM1 family. Homodimer and heterodimers. Interacts with CYSTM3, CYSTM4, CYSTM5, CYSTM6, CYSTM10, WIH1/CYSTM13 and CYSTM11. Binds weakly to CYSTM1, CYSTM2 and CYSTM12. As to expression, mostly expressed in siliques and, to a lower extent, in stems, roots, leaves and flowers.

It localises to the cell membrane. Its function is as follows. Involved in resistance to abiotic stress. The protein is Protein CYSTEINE-RICH TRANSMEMBRANE MODULE 7 of Arabidopsis thaliana (Mouse-ear cress).